Here is a 709-residue protein sequence, read N- to C-terminus: Polyribonucleotide nucleotidyltransferase (709 aa).

Residues D490 and D496 each coordinate Mg(2+). One can recognise a KH domain in the interval 557–616; that stretch reads PKVITMRVLPEKIPVIIGPSGKNIKKIIDETGVKIDLDQEGLVRIYAVDGESADKAKEMI. One can recognise an S1 motif domain in the interval 626–694; that stretch reads GEVYMGKVTR…EMGRAKVSLK (69 aa).

It belongs to the polyribonucleotide nucleotidyltransferase family. It depends on Mg(2+) as a cofactor.

The protein resides in the cytoplasm. The enzyme catalyses RNA(n+1) + phosphate = RNA(n) + a ribonucleoside 5'-diphosphate. Its function is as follows. Involved in mRNA degradation. Catalyzes the phosphorolysis of single-stranded polyribonucleotides processively in the 3'- to 5'-direction. This chain is Polyribonucleotide nucleotidyltransferase, found in Persephonella marina (strain DSM 14350 / EX-H1).